The chain runs to 1157 residues: Nitric oxide synthase, inducible (1157 aa).

The short motif at 23–27 (DINNN) is the DINNN-motif; mediates interaction with SPSB1, SPSB2 and SPSB4 element. Positions 29–64 (EKLRQASSSPVTQDDPKCPSRSRHRNECSQPLAETA) are disordered. Positions 110 and 115 each coordinate Zn(2+). Cys200 is a binding site for heme b. The L-arginine site is built by Gln263, Trp372, Tyr373, and Glu377. (6R)-L-erythro-5,6,7,8-tetrahydrobiopterin is bound by residues Arg381, Ile462, Trp463, and Phe476. Tyr491 contributes to the heme b binding site. Residues 515–535 (FKVLVKAVLFAAVLMHKTMAA) are calmodulin-binding. Residues 539 to 677 (ATILFATETG…AFRGWAVQTF (139 aa)) form the Flavodoxin-like domain. Positions 545, 546, 547, 549, 550, 591, 592, 628, 635, 661, and 665 each coordinate FMN. Residues 730–970 (KYVFSMRLKS…VRSASGFQLP (241 aa)) form the FAD-binding FR-type domain. NADP(+) is bound at residue Arg750. FAD contacts are provided by His772, Arg906, Tyr908, Ser909, Thr924, and Ala926. Thr929 serves as a coordination point for NADP(+). Residues Tyr930, Val943, Cys944, and Ser945 each coordinate FAD. NADP(+) contacts are provided by Thr984, Arg1017, Ser1046, Arg1047, Lys1053, Tyr1055, Gln1057, and Asp1090. Positions 1138–1157 (KEGAVGPPSDPRAPGAHGKS) are disordered.

The protein belongs to the NOS family. As to quaternary structure, homodimer. Interacts with NHERF1. Interacts with GAPDH; induced by oxidatively-modified low-densitity lipoprotein (LDL(ox)). Interacts with S100A8 and S100A9 to form the iNOS-S100A8/9 transnitrosylase complex. Interacts with SPSB1, SPSB2 and SPSB4. Interacts with ELOC and CUL5 in the presence of SPSB1 or SPSB2 or SPSB4. Forms a complex with ASL, ASS1 and HSP90AA1; the complex regulates cell-autonomous L-arginine synthesis and citrulline recycling while channeling extracellular L-arginine to nitric oxide synthesis pathway. Requires heme b as cofactor. It depends on FAD as a cofactor. FMN is required as a cofactor. The cofactor is (6R)-L-erythro-5,6,7,8-tetrahydrobiopterin. Post-translationally, polyubiquitinated; mediated by SPSB1, SPSB2 and SPSB4, leading to proteasomal degradation. Detected in both stimulated and unstimulated immune cells and macrophages with little or no up-regulation following cellular stimulation with lipopolysaccharides (LPS) or concanavalin A (ConA).

The protein resides in the cytoplasm. It localises to the cytosol. It catalyses the reaction 2 L-arginine + 3 NADPH + 4 O2 + H(+) = 2 L-citrulline + 2 nitric oxide + 3 NADP(+) + 4 H2O. With respect to regulation, not stimulated by calcium/calmodulin. In terms of biological role, produces nitric oxide (NO) which is a messenger molecule with diverse functions throughout the body. In macrophages, NO mediates tumoricidal and bactericidal actions. Also has nitrosylase activity and mediates cysteine S-nitrosylation of cytoplasmic target proteins such PTGS2/COX2. As component of the iNOS-S100A8/9 transnitrosylase complex involved in the selective inflammatory stimulus-dependent S-nitrosylation of GAPDH implicated in regulation of the GAIT complex activity and probably multiple targets including ANXA5, EZR, MSN and VIM. Involved in inflammation, enhances the synthesis of pro-inflammatory mediators such as IL6 and IL8. The chain is Nitric oxide synthase, inducible (NOS2) from Sus scrofa (Pig).